Here is a 296-residue protein sequence, read N- to C-terminus: Phosphatidylglycerol--prolipoprotein diacylglyceryl transferase (296 aa).

The next 3 membrane-spanning stretches (helical) occupy residues 17–37, 59–79, and 97–117; these read LAVR…IVVG, MMFY…VLFY, and GGMS…LFAW. Position 142 (Arg-142) interacts with a 1,2-diacyl-sn-glycero-3-phospho-(1'-sn-glycerol). 2 helical membrane passes run 230 to 250 and 265 to 285; these read MGAI…TVEF and LSMG…MMIW.

The protein belongs to the Lgt family.

It is found in the cell inner membrane. The catalysed reaction is L-cysteinyl-[prolipoprotein] + a 1,2-diacyl-sn-glycero-3-phospho-(1'-sn-glycerol) = an S-1,2-diacyl-sn-glyceryl-L-cysteinyl-[prolipoprotein] + sn-glycerol 1-phosphate + H(+). Its pathway is protein modification; lipoprotein biosynthesis (diacylglyceryl transfer). In terms of biological role, catalyzes the transfer of the diacylglyceryl group from phosphatidylglycerol to the sulfhydryl group of the N-terminal cysteine of a prolipoprotein, the first step in the formation of mature lipoproteins. This is Phosphatidylglycerol--prolipoprotein diacylglyceryl transferase from Burkholderia pseudomallei (strain 668).